Consider the following 338-residue polypeptide: Lipoate-protein ligase A (338 aa).

One can recognise a BPL/LPL catalytic domain in the interval Pro-29–Val-216. ATP-binding positions include Arg-71, Gly-76–Phe-79, and Lys-134. Residue Lys-134 coordinates (R)-lipoate.

Belongs to the LplA family. In terms of assembly, monomer.

It is found in the cytoplasm. It catalyses the reaction L-lysyl-[lipoyl-carrier protein] + (R)-lipoate + ATP = N(6)-[(R)-lipoyl]-L-lysyl-[lipoyl-carrier protein] + AMP + diphosphate + H(+). It participates in protein modification; protein lipoylation via exogenous pathway; protein N(6)-(lipoyl)lysine from lipoate: step 1/2. It functions in the pathway protein modification; protein lipoylation via exogenous pathway; protein N(6)-(lipoyl)lysine from lipoate: step 2/2. Its function is as follows. Catalyzes both the ATP-dependent activation of exogenously supplied lipoate to lipoyl-AMP and the transfer of the activated lipoyl onto the lipoyl domains of lipoate-dependent enzymes. This is Lipoate-protein ligase A from Salmonella paratyphi B (strain ATCC BAA-1250 / SPB7).